Reading from the N-terminus, the 73-residue chain is Translation initiation factor IF-1 (73 aa).

The S1-like domain occupies 1–73 (MDIKEEAIET…TKGRIVYREK (73 aa)).

The protein belongs to the IF-1 family. As to quaternary structure, component of the 30S ribosomal translation pre-initiation complex which assembles on the 30S ribosome in the order IF-2 and IF-3, IF-1 and N-formylmethionyl-tRNA(fMet); mRNA recruitment can occur at any time during PIC assembly.

Its subcellular location is the cytoplasm. Functionally, one of the essential components for the initiation of protein synthesis. Stabilizes the binding of IF-2 and IF-3 on the 30S subunit to which N-formylmethionyl-tRNA(fMet) subsequently binds. Helps modulate mRNA selection, yielding the 30S pre-initiation complex (PIC). Upon addition of the 50S ribosomal subunit IF-1, IF-2 and IF-3 are released leaving the mature 70S translation initiation complex. This chain is Translation initiation factor IF-1, found in Borreliella afzelii (strain PKo) (Borrelia afzelii).